The following is a 224-amino-acid chain: Ribonuclease T (224 aa).

In terms of domain architecture, Exonuclease spans 32 to 206; it reads VVVDVETGGF…YDTEKTAELF (175 aa). Mg(2+)-binding residues include aspartate 35, glutamate 37, histidine 193, and aspartate 198. The active-site Proton donor/acceptor is histidine 193.

It belongs to the RNase T family. As to quaternary structure, homodimer. Requires Mg(2+) as cofactor.

In terms of biological role, trims short 3' overhangs of a variety of RNA species, leaving a one or two nucleotide 3' overhang. Responsible for the end-turnover of tRNA: specifically removes the terminal AMP residue from uncharged tRNA (tRNA-C-C-A). Also appears to be involved in tRNA biosynthesis. This Pseudomonas aeruginosa (strain UCBPP-PA14) protein is Ribonuclease T.